Consider the following 70-residue polypeptide: Cytochrome c oxidase subunit 8B, mitochondrial (70 aa).

A mitochondrion-targeting transit peptide spans 1 to 24 (MPRLPPALRLLQPPLRCWVVPKLH). Over 25 to 35 (VSAKPARTPTS) the chain is Mitochondrial matrix. The helical transmembrane segment at 36-59 (PAEQAVGLSMMFLSFLVPAGWVLS) threads the bilayer. Residues 60 to 70 (HLESYKKSSTA) are Mitochondrial intermembrane-facing.

This sequence belongs to the cytochrome c oxidase VIII family. In terms of assembly, component of the cytochrome c oxidase (complex IV, CIV), a multisubunit enzyme composed of 14 subunits. The complex is composed of a catalytic core of 3 subunits MT-CO1, MT-CO2 and MT-CO3, encoded in the mitochondrial DNA, and 11 supernumerary subunits COX4I, COX5A, COX5B, COX6A, COX6B, COX6C, COX7A, COX7B, COX7C, COX8 and NDUFA4, which are encoded in the nuclear genome. The complex exists as a monomer or a dimer and forms supercomplexes (SCs) in the inner mitochondrial membrane with NADH-ubiquinone oxidoreductase (complex I, CI) and ubiquinol-cytochrome c oxidoreductase (cytochrome b-c1 complex, complex III, CIII), resulting in different assemblies (supercomplex SCI(1)III(2)IV(1) and megacomplex MCI(2)III(2)IV(2)).

It is found in the mitochondrion inner membrane. The protein operates within energy metabolism; oxidative phosphorylation. Component of the cytochrome c oxidase, the last enzyme in the mitochondrial electron transport chain which drives oxidative phosphorylation. The respiratory chain contains 3 multisubunit complexes succinate dehydrogenase (complex II, CII), ubiquinol-cytochrome c oxidoreductase (cytochrome b-c1 complex, complex III, CIII) and cytochrome c oxidase (complex IV, CIV), that cooperate to transfer electrons derived from NADH and succinate to molecular oxygen, creating an electrochemical gradient over the inner membrane that drives transmembrane transport and the ATP synthase. Cytochrome c oxidase is the component of the respiratory chain that catalyzes the reduction of oxygen to water. Electrons originating from reduced cytochrome c in the intermembrane space (IMS) are transferred via the dinuclear copper A center (CU(A)) of subunit 2 and heme A of subunit 1 to the active site in subunit 1, a binuclear center (BNC) formed by heme A3 and copper B (CU(B)). The BNC reduces molecular oxygen to 2 water molecules using 4 electrons from cytochrome c in the IMS and 4 protons from the mitochondrial matrix. The protein is Cytochrome c oxidase subunit 8B, mitochondrial (COX8B) of Eulemur fulvus fulvus (Brown lemur).